The chain runs to 976 residues: MTSIYTSDLKNHRRAPPPPNGAAGSGSGSSSGSGSGSGSGSGSGSLTNIVTSSNSLGVTANQTKPIQLNINSSKRQSGWVHVKDDGIFTSFRWNKRFMVINDKTLNFYKQEPYSSDGNSNSNTPDLSFPLYLINNINLKPNSGYSKTSQSFEIVPKNNNKSILISVKTNNDYLDWLDAFTTKCPLVQIGENNSGVSSSHPHLQIQHLTNGSLNGNSSSSPTSGLSSSSVLTGGNSGVSGPINFTHKVHVGFDPASGNFTGLPDTWKSLLQHSKITNEDWKKDPVAVIKVLEFYSDINGGNSAAGTPIGSPMINSKTNNNNNDPNNYSSAKNNVQEANLQEWVKPPAKSTVSQFKPSRAAPKPPTPYHLTQLNGSSHQHTSSSGSLPSSGNNNNNNNSTNNNNTKNVSPLNNLMNKSELIPARRAPPPPTSGTSSDTYSNKNHQDRSGYEQQRQQRTDSSQQQQQQQKQHQYQQKSQQQQQQPLSSHQGGTSHIPKQVPPTLPSSGPPTQAASGKSMPSKIHPDLKIQQGTNNYIKSSGTDANQVDGDAKQFIKPFNLQSKKSQQQLASKQPSPPSSQQQQQKPMTSHGLMGTSHSVTKPLNPVNDPIKPLNLKSSKSKEALNETSGVSKTPSPTDKSNKPTAPASGPAVTKTAKQLKKERERLNDLQIIAKLKTVVNNQDPKPLFRIVEKAGQGASGNVYLAEMIKDNNRKIAIKQMDLDAQPRKELIINEILVMKDSQHKNIVNFLDSYLIGDNELWVIMEYMQGGSLTEIIENNDFKLNEKQIATICFETLKGLQHLHKKHIIHRDIKSDNVLLDAYGNVKITDFGFCAKLTDQRNKRATMVGTPYWMAPEVVKQKEYDEKVDVWSLGIMTIEMIEGEPPYLNEEPLKALYLIATNGTPKLKKPELLSNSIKKFLSICLCVDVRYRASTDELLEHSFIQHKSGKIEELAPLLEWKKQQQKHQQHKQETSDTGFA.

The interval 1–46 is disordered; it reads MTSIYTSDLKNHRRAPPPPNGAAGSGSGSSSGSGSGSGSGSGSGSL. Gly residues predominate over residues 23–43; it reads AGSGSGSSSGSGSGSGSGSGS. In terms of domain architecture, PH spans 73–184; that stretch reads SKRQSGWVHV…WLDAFTTKCP (112 aa). The interval 207 to 231 is disordered; sequence LTNGSLNGNSSSSPTSGLSSSSVLT. The CRIB domain occupies 237-250; the sequence is VSGPINFTHKVHVG. Disordered regions lie at residues 298 to 522 and 559 to 658; these read GGNS…KIHP and SKKS…QLKK. 2 stretches are compositionally biased toward low complexity: residues 313-332 and 371-411; these read NSKT…AKNN and LNGS…PLNN. The segment covering 430-440 has biased composition (polar residues); sequence SGTSSDTYSNK. Basic and acidic residues predominate over residues 441–455; the sequence is NHQDRSGYEQQRQQR. A compositionally biased stretch (low complexity) spans 456–487; it reads TDSSQQQQQQQKQHQYQQKSQQQQQQPLSSHQ. Over residues 496–505 the composition is skewed to pro residues; it reads QVPPTLPSSG. Positions 559–583 are enriched in low complexity; sequence SKKSQQQLASKQPSPPSSQQQQQKP. A compositionally biased stretch (polar residues) spans 622–635; it reads NETSGVSKTPSPTD. The Protein kinase domain occupies 685–940; that stretch reads FRIVEKAGQG…TDELLEHSFI (256 aa). Residues 691-699 and Lys715 contribute to the ATP site; that span reads AGQGASGNV. The active-site Proton acceptor is the Asp808.

This sequence belongs to the protein kinase superfamily. STE Ser/Thr protein kinase family. STE20 subfamily. Interacts (via the CRIB domain) with CDC42.

The enzyme catalyses L-seryl-[protein] + ATP = O-phospho-L-seryl-[protein] + ADP + H(+). The catalysed reaction is L-threonyl-[protein] + ATP = O-phospho-L-threonyl-[protein] + ADP + H(+). Its function is as follows. Ser/Thr kinase required for wild-type filamentous growth, chlamydospore formation, and virulence in mouse systemic infection. The sequence is that of Serine/threonine-protein kinase CLA4 (CLA4) from Candida albicans (strain SC5314 / ATCC MYA-2876) (Yeast).